Here is a 568-residue protein sequence, read N- to C-terminus: Putative ABC transporter ATP-binding protein CPE1583 (568 aa).

ABC transporter domains are found at residues 7–248 (IEFK…GIRE) and 303–536 (LEFK…ASLK). Residues 41–48 (GPSGSGKS) and 336–343 (GKNGAGKS) each bind ATP.

This sequence belongs to the ABC transporter superfamily.

The protein localises to the cell membrane. Functionally, probably part of an ABC transporter complex. Responsible for energy coupling to the transport system. This Clostridium perfringens (strain 13 / Type A) protein is Putative ABC transporter ATP-binding protein CPE1583.